The primary structure comprises 390 residues: Pyruvate dehydrogenase E1 component subunit alpha, somatic form, mitochondrial (390 aa).

The N-terminal 29 residues, 1–29, are a transit peptide targeting the mitochondrion; sequence MRKMLAAVSRVLSGVAQKPASRVLVASRH. K63 carries the N6-acetyllysine; alternate modification. K63 carries the N6-succinyllysine; alternate modification. Residues H92, Y118, R119, A157, G165, V167, D196, G197, A198, N225, and Y227 each coordinate pyruvate. Thiamine diphosphate-binding residues include Y118 and R119. 6 residues coordinate thiamine diphosphate: G165, V167, D196, G197, A198, and N225. D196 is a Mg(2+) binding site. Residues N225 and Y227 each contribute to the Mg(2+) site. A Phosphoserine; by PDK1 modification is found at S232. An N6-acetyllysine; alternate modification is found at K244. K244 carries the post-translational modification N6-succinyllysine; alternate. N6-acetyllysine is present on K267. K277 is subject to N6-succinyllysine. Position 292 (H292) interacts with thiamine diphosphate. S293 is modified (phosphoserine; by PDK1, PDK2, PDK3 and PDK4). S295 is subject to Phosphoserine. S300 is subject to Phosphoserine; by PDK1, PDK2, PDK3 and PDK4. Y301 is modified (phosphotyrosine). Residue K313 is modified to N6-acetyllysine; alternate. K313 carries the N6-succinyllysine; alternate modification. Residues K321 and K336 each carry the N6-acetyllysine modification. An N6-succinyllysine modification is found at K385.

Heterotetramer of two PDHA1 and two PDHB subunits. The heterotetramer interacts with DLAT, and is part of the multimeric pyruvate dehydrogenase complex that contains multiple copies of pyruvate dehydrogenase (E1), dihydrolipoamide acetyltransferase (DLAT, E2) and lipoamide dehydrogenase (DLD, E3). These subunits are bound to an inner core composed of about 48 DLAT and 12 PDHX molecules. The cofactor is thiamine diphosphate. Mg(2+) serves as cofactor. In terms of processing, phosphorylation at Ser-232, Ser-293 and Ser-300 by PDK family kinases inactivates the enzyme; for this phosphorylation at a single site is sufficient. Phosphorylation at Ser-293 interferes with access to active site, and thereby inactivates the enzyme. Dephosphorylation at all three sites, i.e. at Ser-232, Ser-293 and Ser-300, is required for reactivation. Post-translationally, acetylation alters the phosphorylation pattern. Deacetylated by SIRT3.

Its subcellular location is the mitochondrion matrix. It carries out the reaction N(6)-[(R)-lipoyl]-L-lysyl-[protein] + pyruvate + H(+) = N(6)-[(R)-S(8)-acetyldihydrolipoyl]-L-lysyl-[protein] + CO2. Its activity is regulated as follows. Pyruvate dehydrogenase activity is inhibited by phosphorylation of PDHA1; it is reactivated by dephosphorylation. In terms of biological role, the pyruvate dehydrogenase complex catalyzes the overall conversion of pyruvate to acetyl-CoA and CO(2), and thereby links the glycolytic pathway to the tricarboxylic cycle. The polypeptide is Pyruvate dehydrogenase E1 component subunit alpha, somatic form, mitochondrial (PDHA1) (Bos taurus (Bovine)).